The chain runs to 268 residues: Testis-specific serine/threonine-protein kinase 3 (268 aa).

One can recognise a Protein kinase domain in the interval 10–265 (YQLGKTIGEG…IEEVSWHPWL (256 aa)). Residues 16–24 (IGEGTYSKV) and lysine 39 each bind ATP. The Proton acceptor role is filled by aspartate 134. A Phosphoserine modification is found at serine 166. Threonine 168 bears the Phosphothreonine mark.

The protein belongs to the protein kinase superfamily. CAMK Ser/Thr protein kinase family. Mg(2+) serves as cofactor. Mn(2+) is required as a cofactor. Autophosphorylated at Ser-166. Phosphorylation at Thr-168 by PDPK1 activates the serine/threonine protein kinase activity.

It is found in the cell projection. The protein resides in the cilium. It localises to the flagellum. The enzyme catalyses L-seryl-[protein] + ATP = O-phospho-L-seryl-[protein] + ADP + H(+). It carries out the reaction L-threonyl-[protein] + ATP = O-phospho-L-threonyl-[protein] + ADP + H(+). With respect to regulation, activated by phosphorylation on Thr-168 by PDPK1. Serine/threonine protein kinase required for spermatid development and male fertility. This Homo sapiens (Human) protein is Testis-specific serine/threonine-protein kinase 3.